A 501-amino-acid chain; its full sequence is MTVLVSLSGISKNFSGVQALKGVDFDLRAGEVHALVGENGAGKSTLMRVLAGEMKPTSGTVSIHGETMQHSGPRGAAGRGISVIHQELALAPDLTVAENIFLGRLPRIVNHRRLRKAASEILERLGFDIDPAIHAGRLTVAHQQVVEIAKALSNRARIIVFDEPTAVLANTDAERLLAIIRELRAGGTGAVYISHRLNEVFDLSDRITVMKDGSHVETLETSATDVDAVIARMVGRQMSALFPSKAGRVPGEVVVRVRNVSRGRKVRDVSFSVRAGEVVGLGGLVGSGRTEVARLVFGADKMDSGTVELNGKPLHLSSPREAVRARIGLVPEDRKQQGVILDAPIRINTTLAKIRSISRLGFLDAGKERQVAVALGAEMRLKASSVDAPVSSLSGGNQQKVALAKWFHADCDLLILDEPTRGVDVGAKGEIYNLINDLAKAGKAILVISSEHQELFGICDRVLVMAEGAIVGELTESKFTEQQLLTLAMTRSARERDETSQ.

ABC transporter domains are found at residues 5–237 (VSLS…VGRQ) and 249–492 (VPGE…MTRS). 37-44 (GENGAGKS) lines the ATP pocket.

This sequence belongs to the ABC transporter superfamily. Carbohydrate importer 2 (CUT2) (TC 3.A.1.2) family.

The protein localises to the cell inner membrane. It catalyses the reaction D-ribose(out) + ATP + H2O = D-ribose(in) + ADP + phosphate + H(+). The enzyme catalyses D-galactose(out) + ATP + H2O = D-galactose(in) + ADP + phosphate + H(+). Part of an ABC transporter complex involved in carbohydrate import. Could be involved in ribose, galactose and/or methyl galactoside import. Responsible for energy coupling to the transport system. In Rhizobium meliloti (strain 1021) (Ensifer meliloti), this protein is Putative ribose/galactose/methyl galactoside import ATP-binding protein 1.